We begin with the raw amino-acid sequence, 146 residues long: MGRFIFVSFGLLVVFLSLSGTGADCPSGWSSYEGHCYKPFNEPKNWADAERFCKLQPKHSHLVSFQSAEEADFVVKLTRPRLKANLVWMGLSNIWHGCNWQWSDGARLNYKDWQEQSECLAFRGVHTEWLNMDCSSTCSFVCKFKA.

A signal peptide spans 1-23; it reads MGRFIFVSFGLLVVFLSLSGTGA. Cystine bridges form between Cys25-Cys36, Cys53-Cys142, and Cys119-Cys134. The 112-residue stretch at 32–143 folds into the C-type lectin domain; the sequence is YEGHCYKPFN…CSSTCSFVCK (112 aa).

Belongs to the snaclec family. Dimer (non-covalently linked) of heterodimers of subunits alpha and beta (disulfide-linked). In terms of tissue distribution, expressed by the venom gland.

Its subcellular location is the secreted. Functionally, elicits platelet aggregation by the binding to the C-type lectin domain family 1 member B (CLEC1B/CLEC2). Binding leads to tyrosine phosphorylation in the cytoplasmic tail of CLEC1B, which promotes the binding of spleen tyrosine kinase (Syk), subsequent activation of PLCgamma2, and platelet activation and aggregation. Binding to GPIbalpha (GP1BA) and alpha2/beta-1 (ITGA2/ITGB1) may also induce aggregation, but this is controversial. The chain is Snaclec rhodocytin subunit beta from Calloselasma rhodostoma (Malayan pit viper).